We begin with the raw amino-acid sequence, 414 residues long: METLQARFDAVQEQLLEIYEQDTSSLDVQITYWTLIRHEQALYYYARRQGILRLGIYQVPPTGVSEKKAKDAIKMTLFLKSLQKSEFAAQPWSLPETSLERFLAAPENTFKKRGQHVTVIYDKDSMNAMEYTLWTEIYAVDDNDQWHKYTSGVDYDGIYFTDAQGNKNYYVSFADDAALYSKLGHWEVQYENQVLSPPVTSSLPPGPNRRRGPQTRGHPRHKSASFRRSASSGSDTRDSRGRSRSPSSSRSRSRSRSRSPSGSHSRPRAPHVPDQETGRPPGGGGRRGSRDQQQGPGGPAPPSPGEVGTRSGPPETKAKGRLAELISAAYDPPVLLLQGCANTLKSFRRRTTQSYPHTFLCMSTSWTWASKTCTVKSGHRMLVAFVNSEQRTLFLATVKIPKGVTCLKGSFDGL.

The transactivation domain stretch occupies residues 1-202; it reads METLQARFDA…QVLSPPVTSS (202 aa). Residues 196–317 are disordered; that stretch reads SPPVTSSLPP…GTRSGPPETK (122 aa). Basic residues predominate over residues 208 to 225; that stretch reads NRRRGPQTRGHPRHKSAS. Residues 331–414 form a DNA-binding domain region; it reads DPPVLLLQGC…TCLKGSFDGL (84 aa).

It belongs to the papillomaviridae E2 protein family. Binds DNA as homodimer. Interacts with protein E1; this interaction greatly increases E1 DNA-binding activity. Interacts with protein L1; this interaction enhances E2-dependent replication and transcription activation. Interacts with protein L2; this interaction inhibits E2 transcriptional activity but not DNA replication function E2. Interacts with protein E7; this interaction inhibits E7 oncogenic activity. Interacts with host TAF1; this interaction modulates E2-dependent transcriptional regulation. Interacts with host BRD4; this interaction mediates E2 transcriptional activation function. Additionally, the interaction with host BRD4 on mitotic chromosomes mediates tethering of the viral genome. Interacts with host TOPBP1; this interaction is required for optimal viral DNA replication. Post-translationally, phosphorylated.

Its subcellular location is the host nucleus. Its function is as follows. Plays a role in the initiation of viral DNA replication. A dimer of E2 interacts with a dimer of E1 in order to improve specificity of E1 DNA binding activity. Once the complex recognizes and binds DNA at specific sites, the E2 dimer is removed from DNA. E2 also regulates viral transcription through binding to the E2RE response element (5'-ACCNNNNNNGGT-3') present in multiple copies in the regulatory regions of the viral genome. Activates or represses transcription depending on E2RE's position with regards to proximal promoter elements including the TATA-box. Repression occurs by sterically hindering the assembly of the transcription initiation complex. The sequence is that of Regulatory protein E2 from Bovine papillomavirus type 3.